The sequence spans 566 residues: Urease subunit alpha 2 (566 aa).

The 439-residue stretch at 128–566 folds into the Urease domain; the sequence is GGVDTHIHFI…LPMAQRYFLF (439 aa). Ni(2+) contacts are provided by His133, His135, and Lys216. An N6-carboxylysine modification is found at Lys216. A substrate-binding site is contributed by His218. Positions 245 and 271 each coordinate Ni(2+). His319 (proton donor) is an active-site residue. Residue Asp359 participates in Ni(2+) binding.

The protein belongs to the metallo-dependent hydrolases superfamily. Urease alpha subunit family. In terms of assembly, may form a heterohexamer of 3 UreC (alpha) and 3 UreAB (gamma/beta) subunits. May also form a heterotrimer of UreA (gamma), UreB (beta) and UreC (alpha) subunits. Three heterotrimers associate to form the active enzyme. Requires Ni cation as cofactor. Post-translationally, carboxylation allows a single lysine to coordinate two nickel ions.

The protein localises to the cytoplasm. The enzyme catalyses urea + 2 H2O + H(+) = hydrogencarbonate + 2 NH4(+). Its pathway is nitrogen metabolism; urea degradation; CO(2) and NH(3) from urea (urease route): step 1/1. The sequence is that of Urease subunit alpha 2 from Pseudomonas syringae pv. syringae (strain B728a).